A 215-amino-acid chain; its full sequence is Outer-membrane lipoprotein carrier protein (215 aa).

Residues 1-24 (MFVLKARHLMAAGLVSLAAWSAGA) form the signal peptide.

The protein belongs to the LolA family. In terms of assembly, monomer.

Its subcellular location is the periplasm. Its function is as follows. Participates in the translocation of lipoproteins from the inner membrane to the outer membrane. Only forms a complex with a lipoprotein if the residue after the N-terminal Cys is not an aspartate (The Asp acts as a targeting signal to indicate that the lipoprotein should stay in the inner membrane). The sequence is that of Outer-membrane lipoprotein carrier protein from Ralstonia nicotianae (strain ATCC BAA-1114 / GMI1000) (Ralstonia solanacearum).